The primary structure comprises 537 residues: MVHFIFVTGGVVSSLGKGLTAASLAMLLQAKGFRVSVRKLDPYLNIDPGTMNPHEHGEVYVTDDGAETDLDLGHYERFTGVSACKFDSITTGAIYSKLLKDERLGNYAGVTVQVIPHVTNIIKDFILSNTKGVDFIICEIGGTVGDIEGLPFFEAIRQIGNQLKSENCLFIHLTLLPYVKTARELKIKPTQHSVKALRAIGISPNILVCRAERHISKGAIDKISLLCNIKSEYVVPAIDQKNIYLVPIAYHNSGLDNKVLKFFNINIMPSKLDKWYDIINRLKDSNSKVRIAIIAKYHKLKDAYKSVIEALNHAGIYYKYKIDLVWTNAENLTEESINKKLLDIDGILVPGGFGERATKGKIIAIKYARTNNIPFFGICFGMQLATIEIAQNLIGIKDAVTEEFKVDGTKIIEKINKNCEDSKITIENVKKTMRLGSYPCSLVANTIAANAYKSLEINERHRHRYKFNNEFQNIFEKHGIVFSGFSKDEEIVEIIELPLLRWFVGVQFHPEFKSKPFEAHPLFIQFIKAAIEYNKCN.

The tract at residues 1-265 (MVHFIFVTGG…DNKVLKFFNI (265 aa)) is amidoligase domain. Serine 13 provides a ligand contact to CTP. Position 13 (serine 13) interacts with UTP. ATP contacts are provided by residues 14-19 (SLGKGL) and aspartate 71. Mg(2+) contacts are provided by aspartate 71 and glutamate 139. Residues 146-148 (DIE) and lysine 222 contribute to the CTP site. Lysine 222 provides a ligand contact to UTP. In terms of domain architecture, Glutamine amidotransferase type-1 spans 290-536 (RIAIIAKYHK…IKAAIEYNKC (247 aa)). Glycine 352 serves as a coordination point for L-glutamine. The Nucleophile; for glutamine hydrolysis role is filled by cysteine 379. Residues 380–383 (FGMQ), glutamate 403, and arginine 464 contribute to the L-glutamine site. Residues histidine 509 and glutamate 511 contribute to the active site.

It belongs to the CTP synthase family. Homotetramer.

The enzyme catalyses UTP + L-glutamine + ATP + H2O = CTP + L-glutamate + ADP + phosphate + 2 H(+). It carries out the reaction L-glutamine + H2O = L-glutamate + NH4(+). The catalysed reaction is UTP + NH4(+) + ATP = CTP + ADP + phosphate + 2 H(+). Its pathway is pyrimidine metabolism; CTP biosynthesis via de novo pathway; CTP from UDP: step 2/2. Its activity is regulated as follows. Allosterically activated by GTP, when glutamine is the substrate; GTP has no effect on the reaction when ammonia is the substrate. The allosteric effector GTP functions by stabilizing the protein conformation that binds the tetrahedral intermediate(s) formed during glutamine hydrolysis. Inhibited by the product CTP, via allosteric rather than competitive inhibition. Functionally, catalyzes the ATP-dependent amination of UTP to CTP with either L-glutamine or ammonia as the source of nitrogen. Regulates intracellular CTP levels through interactions with the four ribonucleotide triphosphates. The protein is CTP synthase of Rickettsia rickettsii (strain Iowa).